The sequence spans 96 residues: uncharacterized protein (96 aa).

Residues 53–71 (VLLMPLLQSFVLSLALMGV) form a helical membrane-spanning segment.

The protein localises to the membrane. This is an uncharacterized protein from Saccharomyces cerevisiae (strain ATCC 204508 / S288c) (Baker's yeast).